Reading from the N-terminus, the 577-residue chain is Arginine--tRNA ligase (577 aa).

The short motif at 122–132 (PNVAKEMHVGH) is the 'HIGH' region element.

This sequence belongs to the class-I aminoacyl-tRNA synthetase family. In terms of assembly, monomer.

It is found in the cytoplasm. The enzyme catalyses tRNA(Arg) + L-arginine + ATP = L-arginyl-tRNA(Arg) + AMP + diphosphate. The chain is Arginine--tRNA ligase from Salmonella paratyphi B (strain ATCC BAA-1250 / SPB7).